Reading from the N-terminus, the 644-residue chain is Exoribonuclease 2 (644 aa).

In terms of domain architecture, RNB spans 189-516 (REDLTALNFV…NHRLLKAIIT (328 aa)). Positions 561–643 (DTRFTAEIID…ETRNVIARPV (83 aa)) constitute an S1 motif domain.

It belongs to the RNR ribonuclease family. RNase II subfamily.

The protein resides in the cytoplasm. The catalysed reaction is Exonucleolytic cleavage in the 3'- to 5'-direction to yield nucleoside 5'-phosphates.. In terms of biological role, involved in mRNA degradation. Hydrolyzes single-stranded polyribonucleotides processively in the 3' to 5' direction. The sequence is that of Exoribonuclease 2 from Yersinia pseudotuberculosis serotype O:3 (strain YPIII).